Here is a 41-residue protein sequence, read N- to C-terminus: Photosystem I reaction center subunit IX (41 aa).

The chain crosses the membrane as a helical span at residues 7 to 27 (YLSTAPVLATLWFGFLAGLLI).

The protein belongs to the PsaJ family.

Its subcellular location is the plastid. The protein resides in the chloroplast thylakoid membrane. In terms of biological role, may help in the organization of the PsaE and PsaF subunits. The chain is Photosystem I reaction center subunit IX from Physcomitrium patens (Spreading-leaved earth moss).